A 302-amino-acid chain; its full sequence is MSDSRRVPITFQGLIQTLNQYWAEQGCVLIQPLDLEVGAGTFHPATFLRALGPEPWNAAYVQPSRRPTDGRYGENPNRLQRYYQYQVAMKPNPDNIQDLYLGSLQALGIDPLVHDLRFVEDNWESPTLGAWGLGWEVWLNGMEVTQFTYFQQAGGLECKPVLGEITYGLERLCMYLQSCDNVYELVWTYGPDGAAVTYGDVYHQNEVEQSTYNFEHANVAELFHRFDACEAEARHLVEVGLPLPAYEQVTKASHAFNLLDARRAISVTERQRYILRVRALAQGVAQAYYAQREKLGFPGVKR.

Belongs to the class-II aminoacyl-tRNA synthetase family. As to quaternary structure, tetramer of two alpha and two beta subunits.

Its subcellular location is the cytoplasm. The enzyme catalyses tRNA(Gly) + glycine + ATP = glycyl-tRNA(Gly) + AMP + diphosphate. This is Glycine--tRNA ligase alpha subunit from Xanthomonas axonopodis pv. citri (strain 306).